Here is a 955-residue protein sequence, read N- to C-terminus: Glutamyl aminopeptidase (955 aa).

The Cytoplasmic portion of the chain corresponds to 1 to 17 (MDIEDKTSKMHCMKGKH). The chain crosses the membrane as a helical; Signal-anchor for type II membrane protein span at residues 18 to 38 (VVIICGVVIAVGLILGLGLGL). The Extracellular portion of the chain corresponds to 39–955 (GLDTKACNPP…LENSEHSNFA (917 aa)). Residues Asn118 and Asn192 are each glycosylated (N-linked (GlcNAc...) asparagine). Residue Glu218 coordinates substrate. 2 N-linked (GlcNAc...) asparagine glycosylation sites follow: Asn319 and Asn335. Position 352-356 (352-356 (GAMEN)) interacts with substrate. Residue His388 participates in Zn(2+) binding. Glu389 acts as the Proton acceptor in catalysis. Residues His392 and Glu411 each coordinate Zn(2+). Residues Asn458, Asn547, Asn584, Asn592, Asn674, Asn759, Asn823, and Asn836 are each glycosylated (N-linked (GlcNAc...) asparagine). Arg882 is a substrate binding site.

The protein belongs to the peptidase M1 family. In terms of assembly, homodimer; disulfide-linked. It depends on Zn(2+) as a cofactor. Post-translationally, N-glycosylated. Glycosylation counts for an increased mass of about 32% of the protein mass (about 48 kDa).

The protein localises to the cell membrane. The enzyme catalyses Release of N-terminal glutamate (and to a lesser extent aspartate) from a peptide.. Its activity is regulated as follows. Substrate specificity is modulated by calcium which enhances the enzymatic activity for cleavage of acidic residues while reducing its activity with neutral and basic residues. Hydrolytic activity is inhibited by the aminopeptidase inhibitor (Leu and acidic inhibitor) amastatin, but not by bestatin (aminopeptidase inhibitor Leu inhibitor), leupeptin, pepstatin A and PMSF. Its hydrolytic activity is also strongly reduced by zinc ions, with a complete inhibition at 0.5 mM, and moderately inhibited by cobalt and copper ions. Its function is as follows. Venom protein that cleaves N-terminal acidic residues from peptides with high potency in presence of calcium. It may have several roles in venom including alteration of blood pressure by cleaving circulating angiotensin-2, general degradation of host tissue, increase of permeability to other venom components, and/or processing of other toxins in the venom. This chain is Glutamyl aminopeptidase, found in Bitis rhinoceros (West African gaboon viper).